A 103-amino-acid chain; its full sequence is Small ribosomal subunit protein uS10 (103 aa).

It belongs to the universal ribosomal protein uS10 family. Part of the 30S ribosomal subunit.

Involved in the binding of tRNA to the ribosomes. This is Small ribosomal subunit protein uS10 from Psychromonas ingrahamii (strain DSM 17664 / CCUG 51855 / 37).